The following is a 776-amino-acid chain: MGKKNKSNGGGNTNNTPTKTPSKPPVKFNDKWASIENGEAKSASVSHYKEPSKEPKFVHPAKLAKEKKIFDGLDIPERVLAHGKVVEQNGGKKRRHREISPKMEAKKPKVESKSKDGVAAKKAHKHFTVSSEVVQSTYFFEEPDNGNEVTLVSNGKETTIEKTVILDEEVEDEEIDEEEFEDEEEVEDEEGMDEDETEIDESEMIVDPKDIERCIEFEDVDDEDEMEDEEEFEDEEEVEDEEVDDEEEEEVADEERGEEQEDEQEEEEEVSDEESVVSEMDADSDDEGFIAGKDREAHVISKDKAARTFAAKPVDFDAFPFNDQDSVVTASRAFGFMVSPCDVQTFFDKFYQSNVLVVHRKTPAYYGNLFSTTRFSELLEKHYLEYNMNINIAQYKDGIRTTLNGKGRVYPQIVKQHLHNLCSVQLVNPQTFDDRIWYLCEILQEQFGCFVGANTYLTPAGSSGFAPHWDEIDAFLLQVEGRKYWRVWAPESAEEELPLESSGNFTEDDMKGKEPVFEGWIEQGDMIYIPRGYTHQARTDKKVHSLHVTVSTGRQWSFANLMEKVIPEAVGALTEERHKLRRGLPIGLFDMGGVVDLDYSQEEHFTEKFKIVVDRHMSRLRNLVADHLLDSSVDSMTKEFMKQALPPILTDKEKKRSVIGLSTNLLGDDLIDFCANTKVKFIRKHTQRLLMESEDSCFISHRMNNSRLFEGRPETLVDFPSTGIDTYRVLWNAYPEWRTLDEIFSCRETKSNTRKEKLAAIQILFQMGVLLVKNPK.

Disordered stretches follow at residues 1 to 57 (MGKK…EPKF), 87 to 126 (EQNG…AHKH), and 165 to 288 (ILDE…DDEG). 2 stretches are compositionally biased toward basic and acidic residues: residues 47–57 (HYKEPSKEPKF) and 98–119 (EISP…DGVA). Acidic residues predominate over residues 166–204 (LDEEVEDEEIDEEEFEDEEEVEDEEGMDEDETEIDESEM). A compositionally biased stretch (basic and acidic residues) spans 206–216 (VDPKDIERCIE). The segment covering 217 to 288 (FEDVDDEDEM…EMDADSDDEG (72 aa)) has biased composition (acidic residues). The JmjC domain maps to 425 to 569 (QLVNPQTFDD…NLMEKVIPEA (145 aa)). Fe cation is bound by residues histidine 468, aspartate 470, and histidine 535.

It belongs to the ROX family. NO66 subfamily. Fe(2+) serves as cofactor.

The protein localises to the nucleus. It catalyses the reaction N(6),N(6)-dimethyl-L-lysyl(36)-[histone H3] + 2 2-oxoglutarate + 2 O2 = L-lysyl(36)-[histone H3] + 2 formaldehyde + 2 succinate + 2 CO2. Functionally, oxygenase that can act as both a histone lysine demethylase and a ribosomal histidine hydroxylase. Specifically demethylates 'Lys-4' (H3K4me) and 'Lys-36' (H3K36me) of histone H3, thereby playing a central role in histone code. This is Bifunctional lysine-specific demethylase and histidyl-hydroxylase NO66 (jmjc-1) from Caenorhabditis briggsae.